The chain runs to 326 residues: Endochitinase (326 aa).

The first 25 residues, 1 to 25 (MVYCTASLPLLLLLLVGLLAGEAFA), serve as a signal peptide directing secretion. The 41-residue stretch at 26-66 (EQCGRQAGGALCPGGLCCSQFGWCGSTSDYCGPTCQSQCGG) folds into the Chitin-binding type-1 domain. Disulfide bonds link C28-C43, C37-C49, C42-C56, C60-C64, C96-C158, C170-C178, and C277-C309. Catalysis depends on E140, which acts as the Proton donor.

Belongs to the glycosyl hydrolase 19 family. Chitinase class I subfamily. As to expression, expressed in the pulp of the fruit (at protein level). Expressed in mesocarp (at protein level).

It catalyses the reaction Random endo-hydrolysis of N-acetyl-beta-D-glucosaminide (1-&gt;4)-beta-linkages in chitin and chitodextrins.. Functionally, defense against chitin-containing fungal pathogens. Has in vitro antifungal activity against F.oxysporum inhibiting its growth and the branching of its hyphae. Has endochitinase activity, but no exochitinase or lysozyme activities. The protein is Endochitinase of Persea americana (Avocado).